Consider the following 190-residue polypeptide: Adenine phosphoribosyltransferase (190 aa).

This sequence belongs to the purine/pyrimidine phosphoribosyltransferase family. As to quaternary structure, homodimer.

Its subcellular location is the cytoplasm. The enzyme catalyses AMP + diphosphate = 5-phospho-alpha-D-ribose 1-diphosphate + adenine. It participates in purine metabolism; AMP biosynthesis via salvage pathway; AMP from adenine: step 1/1. Its function is as follows. Catalyzes a salvage reaction resulting in the formation of AMP, that is energically less costly than de novo synthesis. In Cupriavidus necator (strain ATCC 17699 / DSM 428 / KCTC 22496 / NCIMB 10442 / H16 / Stanier 337) (Ralstonia eutropha), this protein is Adenine phosphoribosyltransferase.